We begin with the raw amino-acid sequence, 80 residues long: uncharacterized protein (80 aa).

This is an uncharacterized protein from Vaccinia virus (strain Western Reserve) (VACV).